The sequence spans 237 residues: Demethylmenaquinone methyltransferase (237 aa).

S-adenosyl-L-methionine-binding positions include Thr58, Asp79, and Asn106–Ala107.

Belongs to the class I-like SAM-binding methyltransferase superfamily. MenG/UbiE family.

The enzyme catalyses a 2-demethylmenaquinol + S-adenosyl-L-methionine = a menaquinol + S-adenosyl-L-homocysteine + H(+). It participates in quinol/quinone metabolism; menaquinone biosynthesis; menaquinol from 1,4-dihydroxy-2-naphthoate: step 2/2. Functionally, methyltransferase required for the conversion of demethylmenaquinol (DMKH2) to menaquinol (MKH2). In Bacillus cereus (strain ATCC 10987 / NRS 248), this protein is Demethylmenaquinone methyltransferase.